The following is a 1273-amino-acid chain: Probable methionine synthase (1273 aa).

One can recognise a Hcy-binding domain in the interval 7-327 (FKELADIAKE…DHINAMYKAV (321 aa)). 3 residues coordinate Zn(2+): Cys249, Cys312, and Cys313. The region spanning 360–621 (FVNIGERCNV…IDKPLLQLLE (262 aa)) is the Pterin-binding domain. The 98-residue stretch at 652 to 749 (KTDEWRNTSV…FMDAERQANI (98 aa)) folds into the B12-binding N-terminal domain. Methylcob(III)alamin is bound by residues Glu699, 772-776 (GDVHD), His775, Ser820, Thr824, and Ala876. The B12-binding domain maps to 762 to 897 (QGTVVIATVK…DMTVRDAFLQ (136 aa)). An AdoMet activation domain is found at 927–1273 (SLKDRRFVAL…LSPIIGYELD (347 aa)). Residues Asp977, Arg1171, and 1225–1226 (YF) contribute to the S-adenosyl-L-methionine site.

It belongs to the vitamin-B12 dependent methionine synthase family. Requires methylcob(III)alamin as cofactor. It depends on Zn(2+) as a cofactor.

It carries out the reaction (6S)-5-methyl-5,6,7,8-tetrahydrofolate + L-homocysteine = (6S)-5,6,7,8-tetrahydrofolate + L-methionine. The protein operates within amino-acid biosynthesis; L-methionine biosynthesis via de novo pathway; L-methionine from L-homocysteine (MetH route): step 1/1. Functionally, catalyzes the transfer of a methyl group from methyl-cobalamin to homocysteine, yielding enzyme-bound cob(I)alamin and methionine. Subsequently, remethylates the cofactor using methyltetrahydrofolate. This Caenorhabditis briggsae protein is Probable methionine synthase (metr-1).